Reading from the N-terminus, the 255-residue chain is uncharacterized protein (255 aa).

A divalent metal cation is bound by residues histidine 6, histidine 8, glutamate 92, histidine 128, histidine 153, and aspartate 203.

This sequence belongs to the metallo-dependent hydrolases superfamily. TatD-type hydrolase family. It depends on a divalent metal cation as a cofactor.

This is an uncharacterized protein from Bacillus subtilis (strain 168).